We begin with the raw amino-acid sequence, 524 residues long: 56 kDa type-specific antigen (524 aa).

The signal sequence occupies residues 1–22 (MKKIMLIASAMSALSLPFSASA). Residues 67–87 (LTTGLPFGGTLAAGMTIAPGF) traverse the membrane as a helical segment. Disordered regions lie at residues 112–132 (SKGE…RKRF) and 387–422 (EKLA…KGKE). 2 stretches are compositionally biased toward basic and acidic residues: residues 395-405 (EDAKNQGEGDC) and 413-422 (EKSKEGKGKE). A helical membrane pass occupies residues 472 to 492 (TGMVASGALGVAINAAEGVYV).

Its subcellular location is the cell membrane. Its function is as follows. May be an adherent factor for rickettsial adsorption to the host-cell surface and a determinant of virulence of individual rickettsial strain. It is the major outer membrane protein. The chain is 56 kDa type-specific antigen from Orientia tsutsugamushi (Rickettsia tsutsugamushi).